A 270-amino-acid chain; its full sequence is 3-methyl-2-oxobutanoate hydroxymethyltransferase (270 aa).

Residues Asp42 and Asp86 each coordinate Mg(2+). 3-methyl-2-oxobutanoate contacts are provided by residues Asp42–Ser43, Asp86, and Lys116. Glu118 provides a ligand contact to Mg(2+). The active-site Proton acceptor is the Glu185.

Belongs to the PanB family. Homodecamer; pentamer of dimers. Mg(2+) serves as cofactor.

Its subcellular location is the cytoplasm. The enzyme catalyses 3-methyl-2-oxobutanoate + (6R)-5,10-methylene-5,6,7,8-tetrahydrofolate + H2O = 2-dehydropantoate + (6S)-5,6,7,8-tetrahydrofolate. It functions in the pathway cofactor biosynthesis; (R)-pantothenate biosynthesis; (R)-pantoate from 3-methyl-2-oxobutanoate: step 1/2. Functionally, catalyzes the reversible reaction in which hydroxymethyl group from 5,10-methylenetetrahydrofolate is transferred onto alpha-ketoisovalerate to form ketopantoate. The polypeptide is 3-methyl-2-oxobutanoate hydroxymethyltransferase (Synechococcus sp. (strain CC9902)).